Consider the following 553-residue polypeptide: Phospholipase B-like 1 (553 aa).

A signal peptide spans 1 to 38; sequence MTRGGPGGRPGLPQPPPLLLLLLLLPLLLVTAEPPKPA. N-linked (GlcNAc...) (high mannose) asparagine; alternate glycosylation occurs at Asn71. Asn71 is a glycosylation site (N-linked (GlcNAc...) (hybrid) asparagine; alternate). The propeptide at 209-227 is removed in mature form; that stretch reads LSPTKNGSLKVFKRWDMGH. N-linked (GlcNAc...) (high mannose) asparagine; alternate glycosylation is found at Asn308 and Asn366. N-linked (GlcNAc...) (hybrid) asparagine; alternate glycans are attached at residues Asn308 and Asn366. An N-linked (GlcNAc...) asparagine glycan is attached at Asn411. 2 disulfides stabilise this stretch: Cys470–Cys475 and Cys474–Cys489. N-linked (GlcNAc...) (high mannose) asparagine; alternate glycosylation is present at Asn526. Asn526 carries N-linked (GlcNAc...) (hybrid) asparagine; alternate glycosylation.

It belongs to the phospholipase B-like family. May form a homodimer, each monomer is composed of a chain A and a chain B. Post-translationally, the maturation cleavages that produces chains A and B are required to open the putative substrate binding pocket. Both chains A and B remain associated in the mature protein. Expressed in neutrophils and monocytes.

It localises to the lysosome. In view of the small size of the putative binding pocket, it has been proposed that it may act as an amidase or a peptidase. Exhibits a weak phospholipase activity, acting on various phospholipids, including phosphatidylcholine, phosphatidylinositol, phosphatidylethanolamine and lysophospholipids. This chain is Phospholipase B-like 1 (PLBD1), found in Homo sapiens (Human).